Here is a 623-residue protein sequence, read N- to C-terminus: Sphingomyelinase C 2 (623 aa).

An N-terminal signal peptide occupies residues 1-25 (MINKITKPKLLIGYYLLLFSLIRCL). 2 stretches are compositionally biased toward low complexity: residues 51-61 (VNSVSINNDPA) and 67-80 (NPAS…NAVP). The disordered stretch occupies residues 51-121 (VNSVSINNDP…DPNPANLASA (71 aa)). Over residues 89-102 (NPVNPASANSNQVN) the composition is skewed to polar residues. Residues 110-121 (PADPNPANLASA) show a composition bias toward low complexity.

Its subcellular location is the secreted. The enzyme catalyses a sphingomyelin + H2O = phosphocholine + an N-acylsphing-4-enine + H(+). This is Sphingomyelinase C 2 (sph2) from Leptospira interrogans serogroup Icterohaemorrhagiae serovar Lai (strain 56601).